A 224-amino-acid polypeptide reads, in one-letter code: 7-cyano-7-deazaguanine synthase (224 aa).

8 to 18 (LSGGMDSAAVI) contacts ATP. Positions 186, 196, 199, and 202 each coordinate Zn(2+).

This sequence belongs to the QueC family. Zn(2+) is required as a cofactor.

It catalyses the reaction 7-carboxy-7-deazaguanine + NH4(+) + ATP = 7-cyano-7-deazaguanine + ADP + phosphate + H2O + H(+). The protein operates within purine metabolism; 7-cyano-7-deazaguanine biosynthesis. In terms of biological role, catalyzes the ATP-dependent conversion of 7-carboxy-7-deazaguanine (CDG) to 7-cyano-7-deazaguanine (preQ(0)). The protein is 7-cyano-7-deazaguanine synthase of Xanthomonas campestris pv. campestris (strain 8004).